The chain runs to 30 residues: Hementerin (30 aa).

It depends on Ca(2+) as a cofactor.

The protein resides in the secreted. Its activity is regulated as follows. Fibrino(geno)lytic activity inhibited by EDTA but not by PMSF, E-64, 6-AHA and aprotinin. Its function is as follows. Cleaves fibrinogen Aalpha (FGA), gamma (FGG) and Bbeta (FGB) chains. Degrades cross-linked fibrin. Has no amidolytic, plasminogenolytic or caseinolytic activity. Inhibits platelet aggregation induced by collagen (IC(50)=7.5ug/ml) and various other agonists, presumably via activation of a nitridergic pathway. Inhibition is accompanied by reduced ATP release from and surface expression of SELP and CD63 on platelets as well as increased intracellular levels of Ca(2+), cGMP and nitric oxide synthase activity. This is Hementerin from Haementeria depressa (Leech).